The primary structure comprises 600 residues: NADH-quinone oxidoreductase subunit C/D (600 aa).

The NADH dehydrogenase I subunit C stretch occupies residues Met1 to Gln190. Positions Asp214–Arg600 are NADH dehydrogenase I subunit D.

In the N-terminal section; belongs to the complex I 30 kDa subunit family. This sequence in the C-terminal section; belongs to the complex I 49 kDa subunit family. As to quaternary structure, NDH-1 is composed of 13 different subunits. Subunits NuoB, CD, E, F, and G constitute the peripheral sector of the complex.

It localises to the cell inner membrane. The catalysed reaction is a quinone + NADH + 5 H(+)(in) = a quinol + NAD(+) + 4 H(+)(out). In terms of biological role, NDH-1 shuttles electrons from NADH, via FMN and iron-sulfur (Fe-S) centers, to quinones in the respiratory chain. The immediate electron acceptor for the enzyme in this species is believed to be ubiquinone. Couples the redox reaction to proton translocation (for every two electrons transferred, four hydrogen ions are translocated across the cytoplasmic membrane), and thus conserves the redox energy in a proton gradient. This chain is NADH-quinone oxidoreductase subunit C/D, found in Shigella boydii serotype 18 (strain CDC 3083-94 / BS512).